Reading from the N-terminus, the 445-residue chain is NADH-quinone oxidoreductase subunit F (445 aa).

61 to 70 contributes to the NAD(+) binding site; that stretch reads GRGGAGFSTG. Residue 174 to 221 participates in FMN binding; it reads GAGRYICGEETALINSLEGRRANPRSKPPFPATSGAWGKPTCVNNVET. [4Fe-4S] cluster contacts are provided by Cys351, Cys354, Cys357, and Cys398.

The protein belongs to the complex I 51 kDa subunit family. In terms of assembly, composed of 13 different subunits. Subunits NuoCD, E, F, and G constitute the peripheral sector of the complex. Requires FMN as cofactor. [4Fe-4S] cluster serves as cofactor.

The catalysed reaction is a quinone + NADH + 5 H(+)(in) = a quinol + NAD(+) + 4 H(+)(out). Its function is as follows. NDH-1 shuttles electrons from NADH, via FMN and iron-sulfur (Fe-S) centers, to quinones in the respiratory chain. The immediate electron acceptor for the enzyme in this species is believed to be ubiquinone. Couples the redox reaction to proton translocation (for every two electrons transferred, four hydrogen ions are translocated across the cytoplasmic membrane), and thus conserves the redox energy in a proton gradient. In Escherichia coli (strain K12), this protein is NADH-quinone oxidoreductase subunit F (nuoF).